The following is a 168-amino-acid chain: MKTYRRRIREKIIQALYTIELTGADMDSASDWLITPQIAEDSGAVRFYKQVLQSIQDHKEEIDGYITKHTFNWDMSRIAIIDKNILRMALAELLYFEDIPPKVSINEAIEIAKKFNSTDKSSKFVNGILDATYNDLKSSGKIKKCGRGLINNSSRNTSRSEEKHSTEK.

The segment at 147–168 is disordered; it reads RGLINNSSRNTSRSEEKHSTEK. Residues 158–168 show a composition bias toward basic and acidic residues; that stretch reads SRSEEKHSTEK.

Belongs to the NusB family.

Involved in transcription antitermination. Required for transcription of ribosomal RNA (rRNA) genes. Binds specifically to the boxA antiterminator sequence of the ribosomal RNA (rrn) operons. This Chlorobium phaeobacteroides (strain BS1) protein is Transcription antitermination protein NusB.